The primary structure comprises 478 residues: Chromosomal replication initiator protein DnaA (478 aa).

Residues 1–71 are domain I, interacts with DnaA modulators; that stretch reads MKEFWQTCVS…EALAAEWFQR (71 aa). Positions 71 to 140 are domain II; it reads RPVQVAFELP…DAAGVVYERS (70 aa). A domain III, AAA+ region region spans residues 141-357; it reads RLNTDLTFDN…GALRKVLAYA (217 aa). ATP contacts are provided by G185, G187, K188, and T189. Positions 358-478 are domain IV, binds dsDNA; that stretch reads RFHGRDVLSV…LHVLEQTLKG (121 aa).

It belongs to the DnaA family. Oligomerizes as a right-handed, spiral filament on DNA at oriC.

Its subcellular location is the cytoplasm. In terms of biological role, plays an essential role in the initiation and regulation of chromosomal replication. ATP-DnaA binds to the origin of replication (oriC) to initiate formation of the DNA replication initiation complex once per cell cycle. Binds the DnaA box (a 9 base pair repeat at the origin) and separates the double-stranded (ds)DNA. Forms a right-handed helical filament on oriC DNA; dsDNA binds to the exterior of the filament while single-stranded (ss)DNA is stabiized in the filament's interior. The ATP-DnaA-oriC complex binds and stabilizes one strand of the AT-rich DNA unwinding element (DUE), permitting loading of DNA polymerase. After initiation quickly degrades to an ADP-DnaA complex that is not apt for DNA replication. Binds acidic phospholipids. This is Chromosomal replication initiator protein DnaA from Bordetella petrii (strain ATCC BAA-461 / DSM 12804 / CCUG 43448).